A 332-amino-acid polypeptide reads, in one-letter code: L-lactate dehydrogenase A chain (332 aa).

Residues 29–57 and R99 contribute to the NAD(+) site; that span reads GAVGMACAISILMKDLADELALVDVMEDK. The substrate site is built by R106, N138, and R169. An NAD(+)-binding site is contributed by N138. H193 serves as the catalytic Proton acceptor. T248 provides a ligand contact to substrate.

The protein belongs to the LDH/MDH superfamily. LDH family. In terms of assembly, homotetramer.

Its subcellular location is the cytoplasm. The catalysed reaction is (S)-lactate + NAD(+) = pyruvate + NADH + H(+). It participates in fermentation; pyruvate fermentation to lactate; (S)-lactate from pyruvate: step 1/1. Functionally, interconverts simultaneously and stereospecifically pyruvate and lactate with concomitant interconversion of NADH and NAD(+). The chain is L-lactate dehydrogenase A chain (LDHA) from Sceloporus undulatus (Eastern fence lizard).